Here is a 301-residue protein sequence, read N- to C-terminus: MNLETLRQERRKWLTWKNIVPYQEAIKALPEYDDVEVSLGDVVDIQIADLSHKDAEQIRETALLMKPWRKGPFRINDLFIDSEWQSQIKYNLLEPHFDLKGKVVGDIGCNNGYYLFRMLSQKPEKLIGFDPSAIYYSQFRFLEHFIKSDIVYELLGVEHVEFYEHKFDTLFCLGVLYHRSDPVAMLKSLFKGLNKGGELILDTFMIDGEGEMCLTPRDRYSKIPNIYFVPTVNALKNWCLRAGFESVEVLEIMKTDLNEQRKTEWIDTQSLEDFLDPDDPEKTVEGYPAPKRVYIKAIKKA.

Residues Lys-70, Trp-84, Lys-89, Gly-108, 130–132, 157–158, Tyr-177, and Arg-292 each bind carboxy-S-adenosyl-L-methionine; these read DPS and VE.

It belongs to the class I-like SAM-binding methyltransferase superfamily. CmoB family. Homotetramer.

The catalysed reaction is carboxy-S-adenosyl-L-methionine + 5-hydroxyuridine(34) in tRNA = 5-carboxymethoxyuridine(34) in tRNA + S-adenosyl-L-homocysteine + H(+). Its function is as follows. Catalyzes carboxymethyl transfer from carboxy-S-adenosyl-L-methionine (Cx-SAM) to 5-hydroxyuridine (ho5U) to form 5-carboxymethoxyuridine (cmo5U) at position 34 in tRNAs. The chain is tRNA U34 carboxymethyltransferase from Sulfurovum sp. (strain NBC37-1).